We begin with the raw amino-acid sequence, 327 residues long: Endo-1,4-beta-xylanase A (327 aa).

The 323-residue stretch at 1-323 folds into the GH10 domain; that stretch reads AASGLEAAMK…KPSYTSTLNT (323 aa). C81 and C123 form a disulfide bridge. A glycan (N-linked (GlcNAc...) asparagine) is linked at N101. E131 acts as the Proton donor in catalysis. The active-site Nucleophile is the E245. The cysteines at positions 273 and 279 are disulfide-linked.

The protein belongs to the glycosyl hydrolase 10 (cellulase F) family. As to quaternary structure, monomer.

Its subcellular location is the secreted. The protein localises to the extracellular space. The catalysed reaction is Endohydrolysis of (1-&gt;4)-beta-D-xylosidic linkages in xylans.. It participates in glycan degradation; xylan degradation. Functionally, catalyzes the hydrolysis of the internal glycosidic bonds in heteroxylans, releasing mainly xylobiose and xylotriose. Most active on oat-spelt xylan. The protein is Endo-1,4-beta-xylanase A of Fusarium oxysporum f. sp. lycopersici (strain 4287 / CBS 123668 / FGSC 9935 / NRRL 34936) (Fusarium vascular wilt of tomato).